The primary structure comprises 82 residues: MELDDHNGETDSVTPISQLGYEACRDELIEVVRLLEQGGLDLDTSLKLWERGEVLAKRCEEHLAGARQRVADALAASEAEQD.

Belongs to the XseB family. Heterooligomer composed of large and small subunits.

It localises to the cytoplasm. The enzyme catalyses Exonucleolytic cleavage in either 5'- to 3'- or 3'- to 5'-direction to yield nucleoside 5'-phosphates.. Bidirectionally degrades single-stranded DNA into large acid-insoluble oligonucleotides, which are then degraded further into small acid-soluble oligonucleotides. The chain is Exodeoxyribonuclease 7 small subunit from Mycobacterium marinum (strain ATCC BAA-535 / M).